The primary structure comprises 171 residues: uncharacterized protein (171 aa).

It belongs to the transferase hexapeptide repeat family.

This is an uncharacterized protein from Bacillus subtilis (strain 168).